The following is a 208-amino-acid chain: Small ribosomal subunit protein uS5 (208 aa).

Residues 48–111 (LEDEVLDINM…DAAKLDITYI (64 aa)) enclose the S5 DRBM domain.

Belongs to the universal ribosomal protein uS5 family. In terms of assembly, part of the 30S ribosomal subunit. Contacts protein S4.

Functionally, with S4 and S12 plays an important role in translational accuracy. The protein is Small ribosomal subunit protein uS5 of Methanosarcina barkeri (strain Fusaro / DSM 804).